Here is a 537-residue protein sequence, read N- to C-terminus: uncharacterized protein (537 aa).

The next 6 membrane-spanning stretches (helical) occupy residues 5-25 (IGLG…PWFV), 40-60 (LAVA…FFGW), 63-83 (VLWV…MAVV), 115-135 (GLYY…HLEG), 149-169 (VYLL…WVTL), and 197-217 (VGIV…ALVI).

It is found in the plastid. The protein localises to the chloroplast membrane. This is an uncharacterized protein from Ostreococcus tauri.